A 465-amino-acid polypeptide reads, in one-letter code: GTPase Der (465 aa).

EngA-type G domains lie at phenylalanine 3–phenylalanine 166 and isoleucine 184–asparagine 358. Residues glycine 9–serine 16, aspartate 56–isoleucine 60, asparagine 118–aspartate 121, glycine 190–serine 197, aspartate 237–valine 241, and asparagine 302–aspartate 305 each bind GTP. Residues lysine 359 to glutamate 443 form the KH-like domain.

It belongs to the TRAFAC class TrmE-Era-EngA-EngB-Septin-like GTPase superfamily. EngA (Der) GTPase family. As to quaternary structure, associates with the 50S ribosomal subunit.

In terms of biological role, GTPase that plays an essential role in the late steps of ribosome biogenesis. The protein is GTPase Der of Francisella philomiragia subsp. philomiragia (strain ATCC 25017 / CCUG 19701 / FSC 153 / O#319-036).